A 111-amino-acid chain; its full sequence is V-type proton ATPase subunit G 2 (111 aa).

It belongs to the V-ATPase G subunit family. V-ATPase is a heteromultimeric enzyme composed of a peripheral catalytic V1 complex (components A to H) attached to an integral membrane V0 proton pore complex (components: a, c, c', c'' and d).

Functionally, catalytic subunit of the peripheral V1 complex of vacuolar ATPase (V-ATPase). V-ATPase is responsible for acidifying a variety of intracellular compartments in eukaryotic cells. This chain is V-type proton ATPase subunit G 2 (VATG2), found in Nicotiana tabacum (Common tobacco).